A 487-amino-acid polypeptide reads, in one-letter code: N-succinylglutamate 5-semialdehyde dehydrogenase (487 aa).

The tract at residues Met-1–Ala-23 is disordered. Gly-220–Gly-225 is an NAD(+) binding site. Active-site residues include Glu-243 and Cys-277.

This sequence belongs to the aldehyde dehydrogenase family. AstD subfamily.

It carries out the reaction N-succinyl-L-glutamate 5-semialdehyde + NAD(+) + H2O = N-succinyl-L-glutamate + NADH + 2 H(+). It participates in amino-acid degradation; L-arginine degradation via AST pathway; L-glutamate and succinate from L-arginine: step 4/5. Catalyzes the NAD-dependent reduction of succinylglutamate semialdehyde into succinylglutamate. The sequence is that of N-succinylglutamate 5-semialdehyde dehydrogenase from Shewanella sp. (strain ANA-3).